The primary structure comprises 634 residues: Carbon monoxide dehydrogenase 2 (634 aa).

The [4Fe-4S] cluster site is built by Cys44, Cys53, Cys56, Cys61, and Cys73. [Ni-4Fe-5S] cluster contacts are provided by His264, Cys343, Cys453, Cys484, and Cys525.

It belongs to the Ni-containing carbon monoxide dehydrogenase family. Homodimer. The cofactor is [4Fe-4S] cluster. It depends on [Ni-4Fe-5S] cluster as a cofactor.

The enzyme catalyses CO + 2 oxidized [2Fe-2S]-[ferredoxin] + H2O = 2 reduced [2Fe-2S]-[ferredoxin] + CO2 + 2 H(+). Functionally, CODH oxidizes carbon monoxide coupled, via CooF, to the reduction of a hydrogen cation by a hydrogenase (possibly CooH). The protein is Carbon monoxide dehydrogenase 2 (cooS2) of Methanosarcina mazei (strain ATCC BAA-159 / DSM 3647 / Goe1 / Go1 / JCM 11833 / OCM 88) (Methanosarcina frisia).